A 1643-amino-acid polypeptide reads, in one-letter code: RNA replication protein (1643 aa).

Residues 59 to 224 (NPYANQTHTH…FHPYTTLEWL (166 aa)) form the Alphavirus-like MT domain. The disordered stretch occupies residues 686–711 (RPTASRKSCQPTPSVDKSGADSPPEK). Over residues 690 to 700 (SRKSCQPTPSV) the composition is skewed to polar residues. The region spanning 828-996 (SDIKNNRTGK…IFSPYCEFYL (169 aa)) is the (+)RNA virus helicase ATP-binding domain. 868–875 (GCGGSGKS) serves as a coordination point for ATP. The (+)RNA virus helicase C-terminal domain occupies 997–1132 (NATHRNVKDL…TYRDEKTEVY (136 aa)). The disordered stretch occupies residues 1131–1155 (VYNSQPASAEPTEPEAPATHFPTAP). Over residues 1136–1155 (PASAEPTEPEAPATHFPTAP) the composition is skewed to low complexity. The RdRp catalytic domain maps to 1372–1479 (RPAHTNDFTA…DRVSIEKDSF (108 aa)). The segment at 1587-1620 (GSASPPHVFEKTADANTAGSSKTHKRNALKKKKQ) is disordered. The span at 1608 to 1620 (KTHKRNALKKKKQ) shows a compositional bias: basic residues.

It belongs to the potexvirus/carlavirus RNA replication protein family.

It carries out the reaction RNA(n) + a ribonucleoside 5'-triphosphate = RNA(n+1) + diphosphate. The catalysed reaction is ATP + H2O = ADP + phosphate + H(+). Functionally, RNA replication. The central part of this protein possibly functions as an ATP-binding helicase. The polypeptide is RNA replication protein (Narcissus pseudonarcissus (Daffodil)).